We begin with the raw amino-acid sequence, 178 residues long: PRA1 family protein 2 (178 aa).

The Cytoplasmic segment spans residues methionine 1–leucine 41. The chain crosses the membrane as a helical span at residues leucine 42 to valine 62. Topologically, residues arginine 63 to proline 64 are extracellular. The helical transmembrane segment at leucine 65–alanine 85 threads the bilayer. The Cytoplasmic segment spans residues glutamate 86–arginine 96. A helical membrane pass occupies residues serine 97–glycine 119. Topologically, residues alanine 120–threonine 122 are extracellular. A helical membrane pass occupies residues phenylalanine 123–leucine 140. Residues arginine 141–serine 178 are Cytoplasmic-facing.

The protein belongs to the PRA1 family. As to quaternary structure, interacts with CCR5 and GDE1. As to expression, strong expression in the brain, small intestine, lung, spleen, and pancreas as well as in tumor tissues of the breast, colon, lung and ovary, with a weaker expression in normal tissues of the same patient. High expression in neuroblastic tumors. Strongly expressed in Purkinje cells and more moderately in cells of the molecular and the granular layers in the cerebellum. Detected in neuronal cells, but not in non-neuronal cells in the cerebral cortex, hippocampus, and lateral ventricles.

It localises to the endosome membrane. Its function is as follows. May be involved in ER/Golgi transport and vesicular traffic. Plays a proapoptotic role in cerulenin-induced neuroblastoma apoptosis. The chain is PRA1 family protein 2 (PRAF2) from Homo sapiens (Human).